Here is a 586-residue protein sequence, read N- to C-terminus: Arginine--tRNA ligase (586 aa).

Positions Ala-133–Ser-143 match the 'HIGH' region motif.

This sequence belongs to the class-I aminoacyl-tRNA synthetase family. As to quaternary structure, monomer.

The protein resides in the cytoplasm. It carries out the reaction tRNA(Arg) + L-arginine + ATP = L-arginyl-tRNA(Arg) + AMP + diphosphate. The chain is Arginine--tRNA ligase from Leptospira borgpetersenii serovar Hardjo-bovis (strain JB197).